A 202-amino-acid chain; its full sequence is Small ribosomal subunit protein uS4 (202 aa).

The segment at leucine 15–arginine 42 is disordered. Positions asparagine 90–asparagine 152 constitute an S4 RNA-binding domain.

Belongs to the universal ribosomal protein uS4 family. As to quaternary structure, part of the 30S ribosomal subunit. Contacts protein S5. The interaction surface between S4 and S5 is involved in control of translational fidelity.

One of the primary rRNA binding proteins, it binds directly to 16S rRNA where it nucleates assembly of the body of the 30S subunit. In terms of biological role, with S5 and S12 plays an important role in translational accuracy. In Synechococcus sp. (strain CC9311), this protein is Small ribosomal subunit protein uS4.